Reading from the N-terminus, the 659-residue chain is Threonine--tRNA ligase (659 aa).

One can recognise a TGS domain in the interval 7–70 (VQATVTVTFP…TDDATVEIIT (64 aa)). Residues 255–557 (DHRKLGAELE…LIEHTAGNFP (303 aa)) are catalytic. Cysteine 353, histidine 404, and histidine 534 together coordinate Zn(2+).

It belongs to the class-II aminoacyl-tRNA synthetase family. Homodimer. Zn(2+) serves as cofactor.

It localises to the cytoplasm. It catalyses the reaction tRNA(Thr) + L-threonine + ATP = L-threonyl-tRNA(Thr) + AMP + diphosphate + H(+). Its function is as follows. Catalyzes the attachment of threonine to tRNA(Thr) in a two-step reaction: L-threonine is first activated by ATP to form Thr-AMP and then transferred to the acceptor end of tRNA(Thr). Also edits incorrectly charged L-seryl-tRNA(Thr). The chain is Threonine--tRNA ligase from Chlorobium phaeobacteroides (strain BS1).